The chain runs to 629 residues: Tudor and KH domain-containing protein homolog (629 aa).

A helical transmembrane segment spans residues 9-29 (LPIALGLSLVTVTAFVAYYVL). 2 consecutive KH domains span residues 46–109 (INTI…ETLI) and 119–185 (IMSE…KKLV). Residues 198-240 (IEQSKRPPRHSSSPPSPCPSPGDRDADADAQGDVDHTRVKYKR) are disordered. The span at 219 to 240 (GDRDADADAQGDVDHTRVKYKR) shows a compositional bias: basic and acidic residues. Positions 297–362 (HVSVGQVVAA…CELRADLLRL (66 aa)) constitute a Tudor domain. Positions 464–526 (PAPSPRPSPP…GDDSKDKDGI (63 aa)) are disordered.

Belongs to the Tdrkh family. Interacts with (symmetrically methylated) Siwi. Interacts with (symmetrically methylated) Ago3. Interacts with PNLDC1/trimmer; interaction takes place on the mitochondrial surface and recruits PNLDC1/trimmer to Siwi-bound pre-piRNAs.

The protein resides in the mitochondrion outer membrane. In terms of biological role, participates in the primary piRNA biogenesis pathway and is required during spermatogenesis to repress transposable elements and prevent their mobilization, which is essential for the germline integrity. The piRNA metabolic process mediates the repression of transposable elements during meiosis by forming complexes composed of piRNAs and Piwi proteins (Siwi or Ago3) and govern the methylation and subsequent repression of transposons. Required for the final steps of primary piRNA biogenesis by participating in the processing of 31-37 nt intermediates into mature piRNAs: acts by recruiting the exonuclease PNLDC1/trimmer to Siwi-bound pre-piRNAs. The sequence is that of Tudor and KH domain-containing protein homolog from Bombyx mori (Silk moth).